The sequence spans 371 residues: Histidinol-phosphate aminotransferase (371 aa).

The residue at position 228 (K228) is an N6-(pyridoxal phosphate)lysine.

Belongs to the class-II pyridoxal-phosphate-dependent aminotransferase family. Histidinol-phosphate aminotransferase subfamily. Requires pyridoxal 5'-phosphate as cofactor.

The catalysed reaction is L-histidinol phosphate + 2-oxoglutarate = 3-(imidazol-4-yl)-2-oxopropyl phosphate + L-glutamate. Its pathway is amino-acid biosynthesis; L-histidine biosynthesis; L-histidine from 5-phospho-alpha-D-ribose 1-diphosphate: step 7/9. In Methanococcus maripaludis (strain C5 / ATCC BAA-1333), this protein is Histidinol-phosphate aminotransferase.